The following is a 215-amino-acid chain: Adenylate kinase (215 aa).

10–15 contacts ATP; that stretch reads GAGKGT. Residues 30 to 59 form an NMP region; sequence STGDILRANVREGTELGLAAKEYMDKGELV. Residues threonine 31, arginine 36, 57 to 59, 85 to 88, and glutamine 92 each bind AMP; these read ELV and GYPR. The LID stretch occupies residues 126–162; sequence GRLMCNCGASYHRTFNPPKKDDVCDICGGKVFQRADD. An ATP-binding site is contributed by arginine 127. 2 residues coordinate Zn(2+): cysteine 130 and cysteine 132. 135 to 136 provides a ligand contact to ATP; the sequence is SY. The Zn(2+) site is built by cysteine 149 and cysteine 152. The AMP site is built by arginine 159 and arginine 170. Lysine 198 is an ATP binding site.

The protein belongs to the adenylate kinase family. Monomer.

The protein localises to the cytoplasm. The catalysed reaction is AMP + ATP = 2 ADP. Its pathway is purine metabolism; AMP biosynthesis via salvage pathway; AMP from ADP: step 1/1. Functionally, catalyzes the reversible transfer of the terminal phosphate group between ATP and AMP. Plays an important role in cellular energy homeostasis and in adenine nucleotide metabolism. This chain is Adenylate kinase, found in Methanosarcina barkeri (strain Fusaro / DSM 804).